The sequence spans 694 residues: Beta-mannosyltransferase 8 (694 aa).

The Cytoplasmic segment spans residues 1–11; the sequence is MKFPKLRKRTV. A helical membrane pass occupies residues 12–29; the sequence is YWAVLTVFALFTIHFVFQ. Topologically, residues 30–694 are extracellular; it reads YKEHNSHRVQ…YLYDHASVNS (665 aa). N101 and N542 each carry an N-linked (GlcNAc...) asparagine glycan.

This sequence belongs to the BMT family.

It localises to the membrane. Functionally, beta-mannosyltransferase involved in cell wall biosynthesis through beta-1,2-mannosylation of cell wall phosphopeptidomannan. Plays a role in the ability to produce hyphae in the presence of three bacterial species. The polypeptide is Beta-mannosyltransferase 8 (BMT8) (Candida albicans (strain SC5314 / ATCC MYA-2876) (Yeast)).